Consider the following 524-residue polypeptide: Cytochrome P450 4F12 (524 aa).

2 helical membrane passes run 19 to 39 and 87 to 107; these read WLLL…AWTY and GFTV…PDTI. C468 provides a ligand contact to heme.

This sequence belongs to the cytochrome P450 family. It depends on heme as a cofactor. In terms of tissue distribution, expressed in small intestine, liver, colon and heart.

It localises to the endoplasmic reticulum membrane. The protein resides in the microsome membrane. It catalyses the reaction an organic molecule + reduced [NADPH--hemoprotein reductase] + O2 = an alcohol + oxidized [NADPH--hemoprotein reductase] + H2O + H(+). It carries out the reaction (5Z,8Z,11Z,14Z)-eicosatetraenoate + reduced [NADPH--hemoprotein reductase] + O2 = 18-hydroxy-(5Z,8Z,11Z,14Z)-eicosatetraenoate + oxidized [NADPH--hemoprotein reductase] + H2O + H(+). The enzyme catalyses (7Z,10Z,13Z,16Z,19Z)-docosapentaenoate + reduced [NADPH--hemoprotein reductase] + O2 = 10,11-epoxy-(7Z,13Z,16Z,19Z)-docosatetraenoate + oxidized [NADPH--hemoprotein reductase] + H2O + H(+). The catalysed reaction is (7Z,10Z,13Z,16Z,19Z)-docosapentaenoate + reduced [NADPH--hemoprotein reductase] + O2 = 13,14-epoxy-(7Z,10Z,16Z,19Z)-docosatetraenoate + oxidized [NADPH--hemoprotein reductase] + H2O + H(+). It catalyses the reaction (7Z,10Z,13Z,16Z,19Z)-docosapentaenoate + reduced [NADPH--hemoprotein reductase] + O2 = 16,17-epoxy-(7Z,10Z,13Z,19Z)-docosatetraenoate + oxidized [NADPH--hemoprotein reductase] + H2O + H(+). It carries out the reaction (7Z,10Z,13Z,16Z,19Z)-docosapentaenoate + reduced [NADPH--hemoprotein reductase] + O2 = 19,20-epoxy-(7Z,10Z,13Z,16Z)-docosatetraenoate + oxidized [NADPH--hemoprotein reductase] + H2O + H(+). The enzyme catalyses (4Z,7Z,10Z,13Z,16Z,19Z)-docosahexaenoate + reduced [NADPH--hemoprotein reductase] + O2 = 10,11-epoxy-(4Z,7Z,13Z,16Z,19Z)-docosapentaenoate + oxidized [NADPH--hemoprotein reductase] + H2O + H(+). The catalysed reaction is (4Z,7Z,10Z,13Z,16Z,19Z)-docosahexaenoate + reduced [NADPH--hemoprotein reductase] + O2 = 13,14-epoxy-(4Z,7Z,10Z,16Z,19Z)-docosapentaenoate + oxidized [NADPH--hemoprotein reductase] + H2O + H(+). It catalyses the reaction (4Z,7Z,10Z,13Z,16Z,19Z)-docosahexaenoate + reduced [NADPH--hemoprotein reductase] + O2 = 16,17-epoxy-(4Z,7Z,10Z,13Z,19Z)-docosapentaenoate + oxidized [NADPH--hemoprotein reductase] + H2O + H(+). It carries out the reaction (4Z,7Z,10Z,13Z,16Z,19Z)-docosahexaenoate + reduced [NADPH--hemoprotein reductase] + O2 = 19,20-epoxy-(4Z,7Z,10Z,13Z,16Z)-docosapentaenoate + oxidized [NADPH--hemoprotein reductase] + H2O + H(+). Its pathway is lipid metabolism; arachidonate metabolism. A cytochrome P450 monooxygenase involved in the metabolism of endogenous polyunsaturated fatty acids (PUFAs). Mechanistically, uses molecular oxygen inserting one oxygen atom into a substrate, and reducing the second into a water molecule, with two electrons provided by NADPH via cytochrome P450 reductase (CPR; NADPH-ferrihemoprotein reductase). Catalyzes the hydroxylation of carbon hydrogen bonds, with preference for omega-2 position. Metabolizes (5Z,8Z,11Z,14Z)-eicosatetraenoic acid (arachidonate) toward 18-hydroxy arachidonate. Catalyzes the epoxidation of double bonds of PUFAs such as docosapentaenoic and docosahexaenoic acids. Has low omega-hydroxylase activity toward leukotriene B4 and arachidonate. Involved in the metabolism of xenobiotics. Catalyzes the hydroxylation of the antihistamine drug ebastine. The polypeptide is Cytochrome P450 4F12 (Homo sapiens (Human)).